Consider the following 355-residue polypeptide: 3-dehydroquinate synthase (355 aa).

NAD(+) contacts are provided by residues 98–102, 122–123, Lys135, Lys144, and 162–165; these read GVVGD, TT, and TLDT. Glu177, His240, and His257 together coordinate Zn(2+).

It belongs to the sugar phosphate cyclases superfamily. Dehydroquinate synthase family. Co(2+) is required as a cofactor. The cofactor is Zn(2+). Requires NAD(+) as cofactor.

The protein resides in the cytoplasm. It catalyses the reaction 7-phospho-2-dehydro-3-deoxy-D-arabino-heptonate = 3-dehydroquinate + phosphate. The protein operates within metabolic intermediate biosynthesis; chorismate biosynthesis; chorismate from D-erythrose 4-phosphate and phosphoenolpyruvate: step 2/7. Functionally, catalyzes the conversion of 3-deoxy-D-arabino-heptulosonate 7-phosphate (DAHP) to dehydroquinate (DHQ). The polypeptide is 3-dehydroquinate synthase (Dictyoglomus turgidum (strain DSM 6724 / Z-1310)).